The following is a 275-amino-acid chain: Putative replication protein (275 aa).

Residues 98 to 198 enclose the BRCT domain; sequence SKAICFTPYD…RILKISEDYF (101 aa).

This Wigglesworthia glossinidia brevipalpis protein is Putative replication protein.